A 176-amino-acid polypeptide reads, in one-letter code: UBA-like domain-containing protein 1 (176 aa).

The interval 87–176 (SESFHGGGGS…RAHPAMEAER (90 aa)) is disordered. The segment covering 120-137 (TPSWPTAASPPGGPQQHQ) has biased composition (low complexity). Over residues 138–150 (PQPPLWTPAPPSP) the composition is skewed to pro residues. The span at 166-176 (PRAHPAMEAER) shows a compositional bias: basic and acidic residues.

This sequence belongs to the UBALD family.

In Mus musculus (Mouse), this protein is UBA-like domain-containing protein 1 (Ubald1).